The primary structure comprises 83 residues: Gas vesicle protein G (83 aa).

This sequence belongs to the gas vesicle GvpG family. In terms of assembly, gvpF to GvpM interact with each other in vitro, and may form multi-subunit complex(es).

The protein resides in the gas vesicle. Proteins GvpF to GvpM might be involved in nucleating gas vesicle formation. A minor component of the gas vesicle. Gas vesicles are hollow, gas filled proteinaceous nanostructures found in some microorganisms. They allow positioning of halobacteria at the optimal depth for growth in the poorly aerated, shallow brine pools of their habitat. Its function is as follows. Expression of a 9.5 kb mc-vac DNA fragment containing 2 divergently transcribed regions (gvpD-gvpE-gvpF-gvpG-gvpH-gvpI-gvpJ-gvpK-gvpL-gvpM and gvpA-gvpC-gvpN-gvpO) allows H.volcanii to produce gas vesicles. The chain is Gas vesicle protein G from Haloferax mediterranei (strain ATCC 33500 / DSM 1411 / JCM 8866 / NBRC 14739 / NCIMB 2177 / R-4) (Halobacterium mediterranei).